The following is a 367-amino-acid chain: Porin Omp2a (367 aa).

The signal sequence occupies residues 1 to 22 (MNIKSLLLGSAAALVAASGAQA).

This sequence belongs to the alphaproteobacteria porin family. Monomer.

The protein localises to the cell outer membrane. Functionally, forms passive diffusion pores that allow small molecular weight hydrophilic materials across the outer membrane. The sequence is that of Porin Omp2a (omp2a) from Brucella canis (strain ATCC 23365 / NCTC 10854 / RM-666).